A 502-amino-acid polypeptide reads, in one-letter code: Glutamate--tRNA ligase (502 aa).

Positions Pro-12–Gly-22 match the 'HIGH' region motif. The 'KMSKS' region motif lies at Lys-259–Arg-263. Lys-262 is a binding site for ATP.

This sequence belongs to the class-I aminoacyl-tRNA synthetase family. Glutamate--tRNA ligase type 1 subfamily. In terms of assembly, monomer.

Its subcellular location is the cytoplasm. The enzyme catalyses tRNA(Glu) + L-glutamate + ATP = L-glutamyl-tRNA(Glu) + AMP + diphosphate. Catalyzes the attachment of glutamate to tRNA(Glu) in a two-step reaction: glutamate is first activated by ATP to form Glu-AMP and then transferred to the acceptor end of tRNA(Glu). The chain is Glutamate--tRNA ligase from Pelodictyon phaeoclathratiforme (strain DSM 5477 / BU-1).